Here is a 308-residue protein sequence, read N- to C-terminus: CD276 antigen homolog (308 aa).

The signal sequence occupies residues 1-15 (MAALCLLLLLSLAEA). The Extracellular segment spans residues 16–236 (IDLRVPELPV…VTGQHLSFPP (221 aa)). Residues 21-125 (PELPVIGLLD…VQNSSSASVS (105 aa)) enclose the Ig-like V-type domain. Intrachain disulfides connect Cys-37/Cys-112 and Cys-155/Cys-210. The Ig-like C2-type domain occupies 135–228 (PTLHLEPSEA…DVTHASLTVT (94 aa)). Residues 237–257 (LVLWVTVGLSICLLCLLVALA) traverse the membrane as a helical segment. Over 258 to 308 (CVCRKHLKQTCEEEQENAGNEEHEENGELKTAMQPLKVTSPGEDDDAECLE) the chain is Cytoplasmic. Positions 270–308 (EEQENAGNEEHEENGELKTAMQPLKVTSPGEDDDAECLE) are disordered. Positions 299 to 308 (GEDDDAECLE) are enriched in acidic residues.

Belongs to the immunoglobulin superfamily. BTN/MOG family.

Its subcellular location is the membrane. Modulates immune responses. The chain is CD276 antigen homolog (cd276) from Xenopus laevis (African clawed frog).